A 331-amino-acid polypeptide reads, in one-letter code: Induced myeloid leukemia cell differentiation protein Mcl-1 homolog (331 aa).

Residues 85 to 156 (LAVPPEEMAA…PPEEEEDDLY (72 aa)) form a PEST-like region. Ser102 is subject to Phosphoserine. A Glycyl lysine isopeptide (Lys-Gly) (interchain with G-Cter in ubiquitin) cross-link involves residue Lys117. The segment at 130-154 (EAAKSSGADGSLPSTPPPPEEEEDD) is disordered. A Phosphoserine; by GSK3-alpha and GSK3-beta modification is found at Ser140. Ser143 is modified (phosphoserine). Thr144 is modified (phosphothreonine; by MAPK). Residues Lys175 and Lys178 each participate in a glycyl lysine isopeptide (Lys-Gly) (interchain with G-Cter in ubiquitin) cross-link. The BH3 signature appears at 190–204 (ALETLRRVGDGVQRN). The BH1 motif lies at 234 to 253 (VFKDGVTNWGRIVTLISFGA). The BH2 signature appears at 285 to 300 (DWLVKQRGWDGFVEFF). A helical membrane pass occupies residues 308–330 (GIRNVLLAFAGVAGVGAGLAYLI).

The protein belongs to the Bcl-2 family. In terms of assembly, interacts with HIF3A isoform 2 (via C-terminus domain). Interacts with BAD, BOK, BIK, BAX, BAK1, and TPT1. Interacts with BBC3, BMF and PMAIP1. Interacts with BOP. Interacts with BCL2L11; this interaction may sequester BCL2L11 and prevent its pro-apoptotic activity. Interacts with GIMAP5 and HSPA8/HSC70; the interaction between HSPA8 and MCL1 is impaired in the absence of GIMAP5. Post-translationally, cleaved by CASP3 during apoptosis, yielding a pro-apoptotic C-terminal fragment. Rapidly degraded in the absence of phosphorylation in the PEST region. In terms of processing, phosphorylated on Ser-140, by GSK3, in response to IL3/interleukin-3 withdrawal. Phosphorylation at Ser-140 induces ubiquitination and proteasomal degradation, abrogating the anti-apoptotic activity. Treatment with taxol or okadaic acid induces phosphorylation on additional sites. Post-translationally, ubiquitinated. Ubiquitination is induced by phosphorylation at Ser-140. Deubiquitinated by USP20; leading to increased stability.

The protein localises to the membrane. It is found in the cytoplasm. Its subcellular location is the mitochondrion. The protein resides in the nucleus. It localises to the nucleoplasm. Functionally, involved in the regulation of apoptosis versus cell survival, and in the maintenance of viability but not of proliferation. Mediates its effects by interactions with a number of other regulators of apoptosis. Isoform 2 has antiapoptotic activity. This chain is Induced myeloid leukemia cell differentiation protein Mcl-1 homolog (Mcl1), found in Mus musculus (Mouse).